The chain runs to 454 residues: 5-hydroxytryptamine receptor 3D (454 aa).

Residues 1-24 (MQKHSPGPPALALLSQSLLTTGNG) form the signal peptide. Residues 25 to 232 (DTLIINCPGF…IRRRCRPSPY (208 aa)) are Extracellular-facing. N-linked (GlcNAc...) asparagine glycosylation occurs at Asn66. Residues 233 to 253 (VVNFLVPSGILIAIDALSFYL) traverse the membrane as a helical segment. Residues 254–264 (PLESGNCAPFK) are Cytoplasmic-facing. The helical transmembrane segment at 265–285 (MTVLLGYSVFLLMMNDLLPAT) threads the bilayer. Residues 286 to 306 (STSSHASLVAPLALMQTPLPA) lie on the Extracellular side of the membrane. The helical transmembrane segment at 307–327 (GVYFALCLSLMVGSLLETIFI) threads the bilayer. The Cytoplasmic segment spans residues 328–431 (THLLHVATTQ…WVQFSHAMDA (104 aa)). Positions 363-410 (PQKGNKGPGLTPTHLPGVKEPEVSAGQMPGPGEAELTGGSEWTRAQRE) are disordered. An HA-stretch; determines single-channel conductance in 5-HT3 receptors region spans residues 399 to 430 (TGGSEWTRAQREHEAQKQHSVELWVQFSHAMD). The chain crosses the membrane as a helical span at residues 432–452 (LLFRLYLLFMASSIITVICLW). Residues 453 to 454 (NT) are Extracellular-facing.

Belongs to the ligand-gated ion channel (TC 1.A.9) family. 5-hydroxytryptamine receptor (TC 1.A.9.2) subfamily. HTR3D sub-subfamily. In terms of assembly, forms homopentameric as well as heteropentameric serotonin-activated cation-selective channel complexes with HTR3A. The homomeric complex is not functional. Heteropentameric complexes display properties which resemble that of neuronal serotonin-activated channels in vivo. In terms of tissue distribution, expressed in liver, as well as fetal and adult colon and kidney.

The protein localises to the postsynaptic cell membrane. The protein resides in the cell membrane. The catalysed reaction is Na(+)(in) = Na(+)(out). The enzyme catalyses K(+)(in) = K(+)(out). It carries out the reaction Ca(2+)(in) = Ca(2+)(out). Forms serotonin (5-hydroxytryptamine/5-HT3)-activated cation-selective channel complexes, which when activated cause fast, depolarizing responses in neurons. The chain is 5-hydroxytryptamine receptor 3D from Homo sapiens (Human).